The sequence spans 541 residues: Chaperonin GroEL 1 (541 aa).

Residues 29–32 (TLGP), 86–90 (DGTTT), Gly413, 478–480 (NAA), and Asp494 contribute to the ATP site. The disordered stretch occupies residues 520–541 (VVEKPAEAEDDGHGHGHGHHHH). Positions 523–533 (KPAEAEDDGHG) are enriched in basic and acidic residues.

The protein belongs to the chaperonin (HSP60) family. Forms a cylinder of 14 subunits composed of two heptameric rings stacked back-to-back. Interacts with the co-chaperonin GroES.

It localises to the cytoplasm. The catalysed reaction is ATP + H2O + a folded polypeptide = ADP + phosphate + an unfolded polypeptide.. Its function is as follows. Together with its co-chaperonin GroES, plays an essential role in assisting protein folding. The GroEL-GroES system forms a nano-cage that allows encapsulation of the non-native substrate proteins and provides a physical environment optimized to promote and accelerate protein folding. This chain is Chaperonin GroEL 1, found in Mycolicibacterium gilvum (strain PYR-GCK) (Mycobacterium gilvum (strain PYR-GCK)).